Consider the following 151-residue polypeptide: 6,7-dimethyl-8-ribityllumazine synthase (151 aa).

5-amino-6-(D-ribitylamino)uracil-binding positions include Phe-23, 55–57, and 79–81; these read AYE and AVI. 84–85 contributes to the (2S)-2-hydroxy-3-oxobutyl phosphate binding site; it reads AT. His-87 functions as the Proton donor in the catalytic mechanism. Phe-111 lines the 5-amino-6-(D-ribitylamino)uracil pocket. Arg-125 serves as a coordination point for (2S)-2-hydroxy-3-oxobutyl phosphate.

It belongs to the DMRL synthase family.

The catalysed reaction is (2S)-2-hydroxy-3-oxobutyl phosphate + 5-amino-6-(D-ribitylamino)uracil = 6,7-dimethyl-8-(1-D-ribityl)lumazine + phosphate + 2 H2O + H(+). It participates in cofactor biosynthesis; riboflavin biosynthesis; riboflavin from 2-hydroxy-3-oxobutyl phosphate and 5-amino-6-(D-ribitylamino)uracil: step 1/2. In terms of biological role, catalyzes the formation of 6,7-dimethyl-8-ribityllumazine by condensation of 5-amino-6-(D-ribitylamino)uracil with 3,4-dihydroxy-2-butanone 4-phosphate. This is the penultimate step in the biosynthesis of riboflavin. The sequence is that of 6,7-dimethyl-8-ribityllumazine synthase from Leptospira interrogans serogroup Icterohaemorrhagiae serovar copenhageni (strain Fiocruz L1-130).